We begin with the raw amino-acid sequence, 205 residues long: High frequency lysogenization protein HflD homolog (205 aa).

It belongs to the HflD family.

Its subcellular location is the cytoplasm. It localises to the cell inner membrane. This is High frequency lysogenization protein HflD homolog from Aliivibrio fischeri (strain MJ11) (Vibrio fischeri).